Consider the following 900-residue polypeptide: 3'-5' exonuclease DinG (900 aa).

Residues 8–161 enclose the Exonuclease domain; the sequence is VVDLETTGNQ…DEDATTTALL (154 aa). Residues 241–496 enclose the Helicase ATP-binding domain; it reads SEVVKSLNLT…KAIDKLEQQR (256 aa). Residue 276 to 283 participates in ATP binding; that stretch reads APLGSGKS. The DEAH box signature appears at 448–451; it reads DEAH. One can recognise a Helicase C-terminal domain in the interval 713–893; the sequence is DYIQEYVTIT…QFSKLVNKIQ (181 aa).

It belongs to the helicase family. DinG subfamily. Type 2 sub-subfamily.

Its function is as follows. 3'-5' exonuclease. This is 3'-5' exonuclease DinG from Staphylococcus haemolyticus (strain JCSC1435).